Here is a 535-residue protein sequence, read N- to C-terminus: CTP synthase (535 aa).

Residues 1–267 are amidoligase domain; it reads MTKYIFVTGG…DQIVCDHLKL (267 aa). A CTP-binding site is contributed by S13. S13 is a binding site for UTP. 14–19 contributes to the ATP binding site; it reads SLGKGI. Position 54 (Y54) interacts with L-glutamine. An ATP-binding site is contributed by D71. Mg(2+)-binding residues include D71 and E141. CTP contacts are provided by residues 148-150, 188-193, and K224; these read DIE and KTKPTQ. Residues 188-193 and K224 contribute to the UTP site; that span reads KTKPTQ. Position 240–242 (240–242) interacts with ATP; that stretch reads RDA. The 243-residue stretch at 292 to 534 folds into the Glutamine amidotransferase type-1 domain; sequence KIALVGKYVE…VRASITNKES (243 aa). Position 354 (G354) interacts with L-glutamine. C381 (nucleophile; for glutamine hydrolysis) is an active-site residue. Residues 382-385, E405, and R462 each bind L-glutamine; that span reads LGMQ. Residues H507 and E509 contribute to the active site.

It belongs to the CTP synthase family. As to quaternary structure, homotetramer.

It carries out the reaction UTP + L-glutamine + ATP + H2O = CTP + L-glutamate + ADP + phosphate + 2 H(+). The enzyme catalyses L-glutamine + H2O = L-glutamate + NH4(+). It catalyses the reaction UTP + NH4(+) + ATP = CTP + ADP + phosphate + 2 H(+). It participates in pyrimidine metabolism; CTP biosynthesis via de novo pathway; CTP from UDP: step 2/2. Its activity is regulated as follows. Allosterically activated by GTP, when glutamine is the substrate; GTP has no effect on the reaction when ammonia is the substrate. The allosteric effector GTP functions by stabilizing the protein conformation that binds the tetrahedral intermediate(s) formed during glutamine hydrolysis. Inhibited by the product CTP, via allosteric rather than competitive inhibition. Catalyzes the ATP-dependent amination of UTP to CTP with either L-glutamine or ammonia as the source of nitrogen. Regulates intracellular CTP levels through interactions with the four ribonucleotide triphosphates. The protein is CTP synthase of Bacillus cereus (strain ATCC 10987 / NRS 248).